We begin with the raw amino-acid sequence, 332 residues long: T-cell surface glycoprotein CD1b2 (332 aa).

A signal peptide spans 1 to 17 (MLLLVLALLAVLFPAGD). Residues 18-301 (TQDAFPEPIS…ILYWGNSSIG (284 aa)) lie on the Extracellular side of the membrane. N38, N75, and N146 each carry an N-linked (GlcNAc...) asparagine glycan. 3 cysteine pairs are disulfide-bonded: C120-C184, C149-C163, and C224-C279. In terms of domain architecture, Ig-like spans 185-295 (PRYLMSVLEA…LGGQDIILYW (111 aa)). An N-linked (GlcNAc...) asparagine glycan is attached at N297. The helical transmembrane segment at 302–322 (WIILAVFVSCLIVLLFYVLWF) threads the bilayer. The Cytoplasmic segment spans residues 323–332 (YKHWSYQDIL). Residues 328 to 331 (YQDI) carry the Internalization signal motif.

As to quaternary structure, heterodimer with B2M (beta-2-microglobulin). Interacts with saposin C.

The protein localises to the cell membrane. The protein resides in the endosome membrane. It is found in the lysosome membrane. In terms of biological role, antigen-presenting protein that binds self and non-self lipid and glycolipid antigens and presents them to T-cell receptors on natural killer T-cells. The sequence is that of T-cell surface glycoprotein CD1b2 (CD1B2) from Cavia porcellus (Guinea pig).